Here is a 142-residue protein sequence, read N- to C-terminus: MSTPVSEKINNKMRFPFEGIYHTIFPTKFYTRVYCQHNEYQNSISAIAELRVPIGSTIAKYDSDHGMIRADKVIVEKITTVDNDIVSDDFYCGKFNKGAVLNYKDSFKTKHNYSSSGIHGSLYKEKAHYSYDGRLPSIGSSW.

This is an uncharacterized protein from Acanthamoeba polyphaga (Amoeba).